Here is a 923-residue protein sequence, read N- to C-terminus: Immunomodulating metalloprotease (923 aa).

Residues 1 to 41 (MSLSTTAFPSLQGENMSRSPIPRHRALLAGFCLAGALSAQA) form the signal peptide. The Peptidase M60 domain occupies 450-794 (QGFTAIGRMA…FYTQWVHYWA (345 aa)). H696 serves as a coordination point for Zn(2+). The active site involves E697. Residue H700 coordinates Zn(2+).

Belongs to the peptidase M88 family. Zn(2+) is required as a cofactor.

The protein resides in the secreted. Its activity is regulated as follows. Proteolytic activity is blocked in the presence of EDTA. In terms of biological role, protease that degrades several proteins of the host immune system. Cleaves P-selectin glycoprotein ligand-1 (PSGL-1), leading to its functional inhibition; PSGL-1 is a leukocyte cell-surface receptor essential for leukocyte recruitment to the site of infection. Next to PSGL-1, targets host CD43 and CD44 that are also involved in leukocyte homing. Thus, prevents neutrophil extravasation and thereby protects P.aeruginosa from neutrophil attack. Is also able to inhibit the decay accelerating factor (CD55), but not the cell-surface receptors CD46 and CD31. The sequence is that of Immunomodulating metalloprotease from Pseudomonas aeruginosa (strain ATCC 15692 / DSM 22644 / CIP 104116 / JCM 14847 / LMG 12228 / 1C / PRS 101 / PAO1).